The sequence spans 490 residues: MTSKSSPLIFERSREGRYAYSLPISDIKTNSVESLLDDKFIRKNKAEFPEVAELDLVRHYTELSNKNFGVDNGFYPLGSCTMKYNPKINEKVARIPGFSESHPLQDEDQVQGSLEIIYSLQEELKEITGMDEVTLQPAAGAHGEWTALMIFKAYHENNGEGHRDEVIVPDSAHGTNPASASFAGFKSVTVKSNERGEVDIDDLKRVVNENTAAIMLTNPNTLGIFEKNIMEIREIVHNAGGLLYYDGANLNAIMDKVRPGDMGFDAVHLNLHKTFTGPHGGGGPGSGPVGVVKELASYLPKPMVIKDGDTFKYDNDIKNSIGRVKPFYGNFGIYLRAYTYIRTMGATGLKEVSEVAVLNANYIKARLSEHFEIPYKQYCKHEFVLSGVRQKEFGVRTLDMAKRLLDFGVHPPTIYFPLNVEEGMMIEPTETESKETLDYFIDTLISIAEEAKNDPDKVLEAPHTTVIDRLDEATAARKPILKFENLKQEK.

Lys273 is subject to N6-(pyridoxal phosphate)lysine.

It belongs to the GcvP family. C-terminal subunit subfamily. As to quaternary structure, the glycine cleavage system is composed of four proteins: P, T, L and H. In this organism, the P 'protein' is a heterodimer of two subunits. It depends on pyridoxal 5'-phosphate as a cofactor.

The catalysed reaction is N(6)-[(R)-lipoyl]-L-lysyl-[glycine-cleavage complex H protein] + glycine + H(+) = N(6)-[(R)-S(8)-aminomethyldihydrolipoyl]-L-lysyl-[glycine-cleavage complex H protein] + CO2. Functionally, the glycine cleavage system catalyzes the degradation of glycine. The P protein binds the alpha-amino group of glycine through its pyridoxal phosphate cofactor; CO(2) is released and the remaining methylamine moiety is then transferred to the lipoamide cofactor of the H protein. The chain is Probable glycine dehydrogenase (decarboxylating) subunit 2 from Staphylococcus aureus (strain bovine RF122 / ET3-1).